Reading from the N-terminus, the 490-residue chain is 7-ethoxycoumarin O-deethylase (490 aa).

Cysteine 432 is a binding site for heme.

It belongs to the cytochrome P450 family. It depends on heme as a cofactor.

Capable of dealkylating a model xenobiotic compound, 7-ethoxycoumarin. Metabolizes with high efficiency a wide range of xenobiotics, including alkoxycoumarins, alkoxyresorufins, and several herbicides of the class of phenylureas. Catalyzes the double N-dealkylation (oxidative N-demethylation) of phenylureas such as chlortoluron and isoproturon with turnover rates comparable to those reported for physiological substrates and produces non-phytotoxic compounds. Could be used for control of herbicide tolerance and selectivity, as well as soil and groundwater bioremediation. This Helianthus tuberosus (Jerusalem artichoke) protein is 7-ethoxycoumarin O-deethylase (CYP76B1).